The chain runs to 261 residues: Ribonuclease PH (261 aa).

Phosphate is bound by residues Arg86 and 124–126 (GTR).

This sequence belongs to the RNase PH family. In terms of assembly, homohexameric ring arranged as a trimer of dimers.

It carries out the reaction tRNA(n+1) + phosphate = tRNA(n) + a ribonucleoside 5'-diphosphate. Phosphorolytic 3'-5' exoribonuclease that plays an important role in tRNA 3'-end maturation. Removes nucleotide residues following the 3'-CCA terminus of tRNAs; can also add nucleotides to the ends of RNA molecules by using nucleoside diphosphates as substrates, but this may not be physiologically important. Probably plays a role in initiation of 16S rRNA degradation (leading to ribosome degradation) during starvation. The polypeptide is Ribonuclease PH (Persephonella marina (strain DSM 14350 / EX-H1)).